Reading from the N-terminus, the 431-residue chain is UDP-N-acetylglucosamine 1-carboxyvinyltransferase (431 aa).

Residue 22-23 participates in phosphoenolpyruvate binding; that stretch reads KN. UDP-N-acetyl-alpha-D-glucosamine is bound at residue R102. The Proton donor role is filled by C126. C126 is modified (2-(S-cysteinyl)pyruvic acid O-phosphothioketal). Positions 318 and 340 each coordinate UDP-N-acetyl-alpha-D-glucosamine.

It belongs to the EPSP synthase family. MurA subfamily.

The protein localises to the cytoplasm. The catalysed reaction is phosphoenolpyruvate + UDP-N-acetyl-alpha-D-glucosamine = UDP-N-acetyl-3-O-(1-carboxyvinyl)-alpha-D-glucosamine + phosphate. It functions in the pathway cell wall biogenesis; peptidoglycan biosynthesis. In terms of biological role, cell wall formation. Adds enolpyruvyl to UDP-N-acetylglucosamine. This Bartonella tribocorum (strain CIP 105476 / IBS 506) protein is UDP-N-acetylglucosamine 1-carboxyvinyltransferase.